Consider the following 87-residue polypeptide: uncharacterized protein (87 aa).

An N-terminal signal peptide occupies residues 1–22 (MKIKTTVAALSVLSVLSFGAFA).

The protein belongs to the BhsA/McbA family.

The protein resides in the periplasm. This is an uncharacterized protein from Escherichia coli O6:H1 (strain CFT073 / ATCC 700928 / UPEC).